The chain runs to 264 residues: Thymidylate synthase (264 aa).

Position 21 (R21) interacts with dUMP. Position 51 (H51) interacts with (6R)-5,10-methylene-5,6,7,8-tetrahydrofolate. 126 to 127 is a dUMP binding site; the sequence is RR. Residue C146 is the Nucleophile of the active site. DUMP is bound by residues 166 to 169, N177, and 207 to 209; these read RSCD and HLY. D169 serves as a coordination point for (6R)-5,10-methylene-5,6,7,8-tetrahydrofolate. A (6R)-5,10-methylene-5,6,7,8-tetrahydrofolate-binding site is contributed by A263.

The protein belongs to the thymidylate synthase family. Bacterial-type ThyA subfamily. In terms of assembly, homodimer.

The protein resides in the cytoplasm. The enzyme catalyses dUMP + (6R)-5,10-methylene-5,6,7,8-tetrahydrofolate = 7,8-dihydrofolate + dTMP. It participates in pyrimidine metabolism; dTTP biosynthesis. In terms of biological role, catalyzes the reductive methylation of 2'-deoxyuridine-5'-monophosphate (dUMP) to 2'-deoxythymidine-5'-monophosphate (dTMP) while utilizing 5,10-methylenetetrahydrofolate (mTHF) as the methyl donor and reductant in the reaction, yielding dihydrofolate (DHF) as a by-product. This enzymatic reaction provides an intracellular de novo source of dTMP, an essential precursor for DNA biosynthesis. In Photorhabdus laumondii subsp. laumondii (strain DSM 15139 / CIP 105565 / TT01) (Photorhabdus luminescens subsp. laumondii), this protein is Thymidylate synthase.